Reading from the N-terminus, the 745-residue chain is Exocyst complex component 3 (745 aa).

Position 28 is an N6-acetyllysine (Lys-28).

This sequence belongs to the SEC6 family. In terms of assembly, the exocyst complex is composed of EXOC1, EXOC2, EXOC3, EXOC4, EXOC5, EXOC6, EXOC7 and EXOC8. Interacts with EXOC3L1. Interacts with BIRC6/bruce. Interacts with MYRIP. Interacts with SLC6A9. As to expression, expressed in epididymis (at protein level).

The protein localises to the cytoplasm. It is found in the perinuclear region. Its subcellular location is the cell projection. The protein resides in the growth cone. It localises to the midbody. The protein localises to the golgi apparatus. It is found in the neuron projection. In terms of biological role, component of the exocyst complex involved in the docking of exocytic vesicles with fusion sites on the plasma membrane. The protein is Exocyst complex component 3 (EXOC3) of Homo sapiens (Human).